The following is a 426-amino-acid chain: Adenylosuccinate synthetase (426 aa).

Residues 18 to 24 and 46 to 48 contribute to the GTP site; these read GDEGKGK and GHT. The active-site Proton acceptor is the Asp19. Residues Asp19 and Gly46 each coordinate Mg(2+). IMP contacts are provided by residues 19 to 22, 44 to 47, Thr136, Arg150, Gln222, Thr237, and Arg301; these read DEGK and NAGH. His47 (proton donor) is an active-site residue. 297-303 lines the substrate pocket; that stretch reads VTTKRKR. GTP contacts are provided by residues Arg303, 329–331, and 413–415; these read KID and GTG.

The protein belongs to the adenylosuccinate synthetase family. In terms of assembly, homodimer. Mg(2+) is required as a cofactor.

The protein localises to the cytoplasm. It catalyses the reaction IMP + L-aspartate + GTP = N(6)-(1,2-dicarboxyethyl)-AMP + GDP + phosphate + 2 H(+). The protein operates within purine metabolism; AMP biosynthesis via de novo pathway; AMP from IMP: step 1/2. In terms of biological role, plays an important role in the de novo pathway and in the salvage pathway of purine nucleotide biosynthesis. Catalyzes the first committed step in the biosynthesis of AMP from IMP. The chain is Adenylosuccinate synthetase from Schistosoma mansoni (Blood fluke).